We begin with the raw amino-acid sequence, 465 residues long: Purple acid phosphatase 2 (465 aa).

Residues 1–32 (MGASRTGCYLLAVVLAAVMNAAIAGITSSFIR) form the signal peptide. 2 N-linked (GlcNAc...) asparagine glycosylation sites follow: Asn-110 and Asn-138. Asp-164 contacts Fe cation. Asn-172 carries an N-linked (GlcNAc...) asparagine glycan. Fe cation contacts are provided by Asp-193 and Tyr-196. Asp-193 contacts Mn(2+). Asn-230 serves as a coordination point for Mn(2+). Asn-230 contributes to the substrate binding site. N-linked (GlcNAc...) asparagine glycosylation is present at Asn-303. A Mn(2+)-binding site is contributed by His-315. The active-site Proton donor is the His-325. Residue His-352 participates in Mn(2+) binding. 352 to 354 (HVH) is a substrate binding site. His-354 lines the Fe cation pocket. N-linked (GlcNAc...) asparagine glycosylation is found at Asn-400 and Asn-425.

This sequence belongs to the metallophosphoesterase superfamily. Purple acid phosphatase family. In terms of assembly, homodimer; disulfide-linked. The cofactor is Fe cation. Mn(2+) serves as cofactor. Requires Zn(2+) as cofactor. It depends on Cu(2+) as a cofactor. Mg(2+) is required as a cofactor.

It is found in the secreted. It carries out the reaction a phosphate monoester + H2O = an alcohol + phosphate. The protein is Purple acid phosphatase 2 (PAP2) of Ipomoea batatas (Sweet potato).